We begin with the raw amino-acid sequence, 288 residues long: 3'-5' exonuclease (288 aa).

Residues 30–67 (RSSSSSSSAAPTVQATTSVHGHEEDPNQIPNNIRRQLP) are disordered. Polar residues-rich tracts occupy residues 38–48 (AAPTVQATTSV) and 57–67 (QIPNNIRRQLP). One can recognise a 3'-5' exonuclease domain in the interval 129 to 279 (FVGLDIEWRP…ASWHLYKVLK (151 aa)).

In terms of assembly, interacts with KU70 and KU80. Interacts with RECQL2. Requires Mg(2+) as cofactor. Mn(2+) is required as a cofactor. As to expression, expressed ubiquitously.

The protein localises to the nucleus. Its activity is regulated as follows. Activated upon interaction with the KU heterodimer. Not stimulated by ATP. Functionally, exonuclease that digests recessed strands of DNA duplexes in the 3' to 5' direction but hardly single-stranded DNA or blunt-ended duplexes. Also able to digest 3'-protruding strands and 3'-recessed strand termini of duplexes containing mismatched bases. The sequence is that of 3'-5' exonuclease (WEX) from Arabidopsis thaliana (Mouse-ear cress).